A 431-amino-acid chain; its full sequence is Histidine--tRNA ligase (431 aa).

Belongs to the class-II aminoacyl-tRNA synthetase family. As to quaternary structure, homodimer.

The protein localises to the cytoplasm. The catalysed reaction is tRNA(His) + L-histidine + ATP = L-histidyl-tRNA(His) + AMP + diphosphate + H(+). This chain is Histidine--tRNA ligase, found in Levilactobacillus brevis (strain ATCC 367 / BCRC 12310 / CIP 105137 / JCM 1170 / LMG 11437 / NCIMB 947 / NCTC 947) (Lactobacillus brevis).